The primary structure comprises 274 residues: Rhamnulose-1-phosphate aldolase (274 aa).

The active site involves Glu117. Zn(2+) contacts are provided by His141, His143, and His212.

It belongs to the aldolase class II family. RhaD subfamily. As to quaternary structure, homotetramer. It depends on Zn(2+) as a cofactor.

The protein resides in the cytoplasm. The catalysed reaction is L-rhamnulose 1-phosphate = (S)-lactaldehyde + dihydroxyacetone phosphate. It participates in carbohydrate degradation; L-rhamnose degradation; glycerone phosphate from L-rhamnose: step 3/3. Its function is as follows. Catalyzes the reversible cleavage of L-rhamnulose-1-phosphate to dihydroxyacetone phosphate (DHAP) and L-lactaldehyde. This is Rhamnulose-1-phosphate aldolase from Shigella sonnei (strain Ss046).